A 163-amino-acid polypeptide reads, in one-letter code: GTP-dependent dephospho-CoA kinase (163 aa).

The GTP site is built by Asp38, Val39, Asp57, Glu115, and Asp138.

Belongs to the GTP-dependent DPCK family.

It carries out the reaction 3'-dephospho-CoA + GTP = GDP + CoA + H(+). It participates in cofactor biosynthesis; coenzyme A biosynthesis. Functionally, catalyzes the GTP-dependent phosphorylation of the 3'-hydroxyl group of dephosphocoenzyme A to form coenzyme A (CoA). This chain is GTP-dependent dephospho-CoA kinase, found in Methanothermobacter thermautotrophicus (strain ATCC 29096 / DSM 1053 / JCM 10044 / NBRC 100330 / Delta H) (Methanobacterium thermoautotrophicum).